The sequence spans 176 residues: Negative modulator of initiation of replication (176 aa).

It belongs to the SeqA family. In terms of assembly, homodimer. Polymerizes to form helical filaments.

It localises to the cytoplasm. Functionally, negative regulator of replication initiation, which contributes to regulation of DNA replication and ensures that replication initiation occurs exactly once per chromosome per cell cycle. Binds to pairs of hemimethylated GATC sequences in the oriC region, thus preventing assembly of replication proteins and re-initiation at newly replicated origins. Repression is relieved when the region becomes fully methylated. This is Negative modulator of initiation of replication from Hamiltonella defensa subsp. Acyrthosiphon pisum (strain 5AT).